The primary structure comprises 167 residues: tRNA-specific adenosine deaminase (167 aa).

The CMP/dCMP-type deaminase domain maps to 6–117; it reads FSHEYWMRHA…DAKTGAAGSL (112 aa). Position 57 (H57) interacts with Zn(2+). E59 acts as the Proton donor in catalysis. Positions 87 and 90 each coordinate Zn(2+).

The protein belongs to the cytidine and deoxycytidylate deaminase family. As to quaternary structure, homodimer. Zn(2+) is required as a cofactor.

It carries out the reaction adenosine(34) in tRNA + H2O + H(+) = inosine(34) in tRNA + NH4(+). In terms of biological role, catalyzes the deamination of adenosine to inosine at the wobble position 34 of tRNA(Arg2). The sequence is that of tRNA-specific adenosine deaminase from Escherichia coli O157:H7.